The primary structure comprises 396 residues: Glycerate kinase (396 aa).

The protein belongs to the glycerate kinase type-2 family.

The protein resides in the cytoplasm. The enzyme catalyses (R)-glycerate + ATP = (2R)-3-phosphoglycerate + ADP + H(+). This Macaca fascicularis (Crab-eating macaque) protein is Glycerate kinase (GLYCTK).